Here is a 72-residue protein sequence, read N- to C-terminus: Protein CYSTEINE-RICH TRANSMEMBRANE MODULE 9 (72 aa).

The segment covering Met-1–Tyr-22 has biased composition (polar residues). Residues Met-1 to Glu-46 form a disordered region. Residues Ser-49–Cys-65 traverse the membrane as a helical segment.

The protein belongs to the CYSTM1 family. As to quaternary structure, heterodimers. Interacts with WIH1/CYSTM13. As to expression, mostly expressed in roots and flowers and, to a lower extent, in stems, siliques and leaves.

The protein localises to the cell membrane. It is found in the nucleus. Its function is as follows. Involved in resistance to abiotic stress. The polypeptide is Protein CYSTEINE-RICH TRANSMEMBRANE MODULE 9 (Arabidopsis thaliana (Mouse-ear cress)).